A 430-amino-acid chain; its full sequence is POU domain, class 2, transcription factor 3 (430 aa).

Disordered stretches follow at residues 1 to 40 (MVNL…NGLD), 60 to 81 (HRPC…SGDM), 129 to 180 (LLLP…EPTD), and 248 to 267 (DAES…YPTL). Polar residues-rich tracts occupy residues 23 to 32 (ARSTFGQVES) and 67 to 78 (QGPTMMPGNQMS). The segment covering 129–139 (LLLPQTGPGLT) has biased composition (low complexity). Residues 176 to 250 (DEPTDLEELE…LLEKWLNDAE (75 aa)) form the POU-specific domain. Residues 251–267 (SSPSDPSASTPSSYPTL) are compositionally biased toward low complexity. Positions 274–333 (KRKKRTSIETNIRLTLEKRFQDNPKPSSEEISMIAEQLSMEKEVVRVWFCNRRQKEKRIN) form a DNA-binding region, homeobox. Composition is skewed to low complexity over residues 355-364 (SLGSLSVPPV) and 374-390 (SSCS…PGSG). The disordered stretch occupies residues 355–413 (SLGSLSVPPVHSTMPGTVTSSCSPGNNSRPSSPGSGLHASSPTASQNNSKAAMNPSSAA). Over residues 392–413 (HASSPTASQNNSKAAMNPSSAA) the composition is skewed to polar residues.

Belongs to the POU transcription factor family. Class-2 subfamily. As to quaternary structure, interacts (via the POU domain) with POU2AF1 and POU2AF2 in a DNA-dependent manner; this interaction recruits POU2AF2 to chromatin and increases POU2F3 transactivation activity. As to expression, expressed in epidermis and hair follicles.

Its subcellular location is the nucleus. Functionally, transcription factor that binds to the octamer motif (5'-ATTTGCAT-3') and regulates cell type-specific differentiation pathways. Involved in the regulation of keratinocytes differentiation. The POU2F3-POU2AF2/POU2AF3 complex drives the expression of tuft-cell-specific genes, a rare chemosensory cells that coordinate immune and neural functions within mucosal epithelial tissues. Its function is as follows. Inhibits transactivation by POU2F1. This is POU domain, class 2, transcription factor 3 (Pou2f3) from Rattus norvegicus (Rat).